Reading from the N-terminus, the 419-residue chain is Gamma-glutamyl phosphate reductase (419 aa).

This sequence belongs to the gamma-glutamyl phosphate reductase family.

It is found in the cytoplasm. It catalyses the reaction L-glutamate 5-semialdehyde + phosphate + NADP(+) = L-glutamyl 5-phosphate + NADPH + H(+). It functions in the pathway amino-acid biosynthesis; L-proline biosynthesis; L-glutamate 5-semialdehyde from L-glutamate: step 2/2. Its function is as follows. Catalyzes the NADPH-dependent reduction of L-glutamate 5-phosphate into L-glutamate 5-semialdehyde and phosphate. The product spontaneously undergoes cyclization to form 1-pyrroline-5-carboxylate. The chain is Gamma-glutamyl phosphate reductase from Maridesulfovibrio salexigens (strain ATCC 14822 / DSM 2638 / NCIMB 8403 / VKM B-1763) (Desulfovibrio salexigens).